Consider the following 1059-residue polypeptide: Putative ATP-dependent RNA helicase BoYb (1059 aa).

Positions 54–82 (RRFAEVSLLPDILETMRNLGLNRLLRLQS) match the Q motif motif. The Helicase ATP-binding domain occupies 87–284 (HLAGGSGHGA…RAVNDKPALV (198 aa)). 100–107 (GSPASGRT) contributes to the ATP binding site. The short motif at 230–233 (DDVD) is the DEAD box element. Residues 575–639 (PPVAGAICMY…GKLFECPEAL (65 aa)) form the Tudor domain. A disordered region spans residues 756–787 (VQDSKEKANSKPHEKMKGKMTDQPAKLQSQPP). A compositionally biased stretch (basic and acidic residues) spans 757–775 (QDSKEKANSKPHEKMKGKM).

It localises to the cytoplasm. It catalyses the reaction ATP + H2O = ADP + phosphate + H(+). In terms of biological role, involved in primary piRNA biogenesis in germline cells. This Drosophila melanogaster (Fruit fly) protein is Putative ATP-dependent RNA helicase BoYb (BoYb).